A 378-amino-acid chain; its full sequence is Actin-related protein 2/3 complex subunit 1B (378 aa).

WD repeat units follow at residues 8-47 (RFAE…HWER), 53-92 (KHDQ…WVPT), 97-138 (RLNR…WVSK), 143-182 (RHES…VDTK), 203-242 (LSYS…PLAQ), 257-295 (ISEK…KAAS), and 331-375 (VHDN…QELG). Residues 319–340 (TTANDASDSRGGVHDNSITSIV) are disordered.

It belongs to the WD repeat ARPC1 family. As to quaternary structure, component of the Arp2/3 complex composed of ARP2, ARP3, ARPC1/p41-ARC, ARPC2/p34-ARC, ARPC3/p21-ARC, ARPC4/p20-ARC and ARPC5/p16-ARC. In terms of tissue distribution, expressed at low levels in all tissues with a relatively highest expression in inflorescences.

The protein resides in the cytoplasm. The protein localises to the cytoskeleton. Its function is as follows. Functions as a component of the Arp2/3 complex which is involved in regulation of actin polymerization and together with an activating nucleation-promoting factor (NPF) mediates the formation of branched actin networks. Arp2/3 complex plays a critical role in the control of cell morphogenesis via the modulation of cell polarity development. The protein is Actin-related protein 2/3 complex subunit 1B (ARPC1B) of Arabidopsis thaliana (Mouse-ear cress).